We begin with the raw amino-acid sequence, 807 residues long: Anaphase-promoting complex subunit 4 (807 aa).

Position 469 is a phosphotyrosine (Y469). Positions 755–788 (DESSDDEEEAGGKPVKIKEEVLSESETEAHQDAA) are disordered. S757 and S758 each carry phosphoserine. Positions 770–785 (KIKEEVLSESETEAHQ) are enriched in basic and acidic residues. K772 participates in a covalent cross-link: Glycyl lysine isopeptide (Lys-Gly) (interchain with G-Cter in SUMO2). 2 positions are modified to phosphoserine: S777 and S779. K797 is covalently cross-linked (Glycyl lysine isopeptide (Lys-Gly) (interchain with G-Cter in SUMO2)).

It belongs to the APC4 family. In terms of assembly, the mammalian APC/C is composed at least of 14 distinct subunits ANAPC1, ANAPC2, CDC27/APC3, ANAPC4, ANAPC5, CDC16/APC6, ANAPC7, CDC23/APC8, ANAPC10, ANAPC11, CDC26/APC12, ANAPC13, ANAPC15 and ANAPC16 that assemble into a complex of at least 19 chains with a combined molecular mass of around 1.2 MDa; APC/C interacts with FZR1 and FBXO5. In the context of the APC/C complex, directly interacts with UBE2S. Interacts with FBXO43.

Its subcellular location is the nucleus. The protein operates within protein modification; protein ubiquitination. Its function is as follows. Component of the anaphase promoting complex/cyclosome (APC/C), a cell cycle-regulated E3 ubiquitin ligase that controls progression through mitosis and the G1 phase of the cell cycle. The APC/C complex acts by mediating ubiquitination and subsequent degradation of target proteins: it mainly mediates the formation of 'Lys-11'-linked polyubiquitin chains and, to a lower extent, the formation of 'Lys-48'- and 'Lys-63'-linked polyubiquitin chains. The APC/C complex catalyzes assembly of branched 'Lys-11'-/'Lys-48'-linked branched ubiquitin chains on target proteins. The polypeptide is Anaphase-promoting complex subunit 4 (Anapc4) (Mus musculus (Mouse)).